The primary structure comprises 506 residues: Spindle pole body protein CSA6 (506 aa).

Disordered stretches follow at residues 18–121 (SPIK…PNEN), 252–276 (EKHN…VETQ), 329–429 (PSSP…YSIR), and 447–470 (KNDQ…EEKV). Residues 38–48 (IDLRDYMDRQK) are compositionally biased toward basic and acidic residues. The span at 50 to 59 (SRNYSDSEYT) shows a compositional bias: polar residues. Positions 63 to 72 (IKREKPETKQ) are enriched in basic and acidic residues. Polar residues predominate over residues 94–119 (PTKNYSQHVMQERSAPNSPQKKSLPN). 2 stretches are compositionally biased toward polar residues: residues 330–353 (SSPN…SVNL) and 361–389 (QPSH…NPSP). Basic and acidic residues-rich tracts occupy residues 412–422 (EWTREREERDG) and 461–470 (TDGKEEEEKV).

The protein resides in the cytoplasm. It is found in the cytoskeleton. The protein localises to the microtubule organizing center. Its subcellular location is the spindle pole body. In terms of biological role, plays a role in mitotic spindle pole body organization, possibly at the point of spindle pole body separation. Required for mitotic exit. This Candida tropicalis (strain ATCC MYA-3404 / T1) (Yeast) protein is Spindle pole body protein CSA6.